The following is a 447-amino-acid chain: 2-oxoadipate dioxygenase/decarboxylase (447 aa).

His-68, Arg-72, and His-224 together coordinate 2-oxoadipate. A Fe(2+)-binding site is contributed by His-68. Residues His-224 and Glu-290 each contribute to the Fe(2+) site. A 2-oxoadipate-binding site is contributed by Val-391.

It belongs to the 2-oxoadipate dioxygenase/decarboxylase family. Fe(2+) serves as cofactor.

The enzyme catalyses 2-oxoadipate + O2 = (R)-2-hydroxyglutarate + CO2. Functionally, catalyzes the decarboxylation and hydroxylation of 2-oxoadipate (2OA) to form D-2-hydroxyglutarate (D-2-HGA). This is 2-oxoadipate dioxygenase/decarboxylase from Shigella flexneri.